A 97-amino-acid polypeptide reads, in one-letter code: Co-chaperonin GroES (97 aa).

Belongs to the GroES chaperonin family. In terms of assembly, heptamer of 7 subunits arranged in a ring. Interacts with the chaperonin GroEL.

It localises to the cytoplasm. Functionally, together with the chaperonin GroEL, plays an essential role in assisting protein folding. The GroEL-GroES system forms a nano-cage that allows encapsulation of the non-native substrate proteins and provides a physical environment optimized to promote and accelerate protein folding. GroES binds to the apical surface of the GroEL ring, thereby capping the opening of the GroEL channel. This Pseudomonas entomophila (strain L48) protein is Co-chaperonin GroES.